Here is a 113-residue protein sequence, read N- to C-terminus: Probable 4-amino-4-deoxy-L-arabinose-phosphoundecaprenol flippase subunit ArnE (113 aa).

Transmembrane regions (helical) follow at residues 37-57, 62-82, and 91-111; these read SALK…LFWL, ILPL…VTLA, and AGIK…LMSL. The EamA domain maps to 45 to 111; that stretch reads AVILLAVGML…IMLGILLMSL (67 aa).

This sequence belongs to the ArnE family. Heterodimer of ArnE and ArnF.

The protein localises to the cell inner membrane. Its pathway is bacterial outer membrane biogenesis; lipopolysaccharide biosynthesis. In terms of biological role, translocates 4-amino-4-deoxy-L-arabinose-phosphoundecaprenol (alpha-L-Ara4N-phosphoundecaprenol) from the cytoplasmic to the periplasmic side of the inner membrane. This Photorhabdus laumondii subsp. laumondii (strain DSM 15139 / CIP 105565 / TT01) (Photorhabdus luminescens subsp. laumondii) protein is Probable 4-amino-4-deoxy-L-arabinose-phosphoundecaprenol flippase subunit ArnE.